The primary structure comprises 72 residues: Translation initiation factor IF-1 (72 aa).

In terms of domain architecture, S1-like spans 1–72 (MSKEDVIEVE…TRGRITWRAK (72 aa)).

It belongs to the IF-1 family. As to quaternary structure, component of the 30S ribosomal translation pre-initiation complex which assembles on the 30S ribosome in the order IF-2 and IF-3, IF-1 and N-formylmethionyl-tRNA(fMet); mRNA recruitment can occur at any time during PIC assembly.

It is found in the cytoplasm. Its function is as follows. One of the essential components for the initiation of protein synthesis. Stabilizes the binding of IF-2 and IF-3 on the 30S subunit to which N-formylmethionyl-tRNA(fMet) subsequently binds. Helps modulate mRNA selection, yielding the 30S pre-initiation complex (PIC). Upon addition of the 50S ribosomal subunit IF-1, IF-2 and IF-3 are released leaving the mature 70S translation initiation complex. The chain is Translation initiation factor IF-1 from Acetivibrio thermocellus (strain ATCC 27405 / DSM 1237 / JCM 9322 / NBRC 103400 / NCIMB 10682 / NRRL B-4536 / VPI 7372) (Clostridium thermocellum).